We begin with the raw amino-acid sequence, 238 residues long: Small ribosomal subunit protein eS4 (238 aa).

An S4 RNA-binding domain is found at L38–I110.

It belongs to the eukaryotic ribosomal protein eS4 family.

The sequence is that of Small ribosomal subunit protein eS4 from Pyrobaculum islandicum (strain DSM 4184 / JCM 9189 / GEO3).